A 388-amino-acid chain; its full sequence is Succinate--CoA ligase [ADP-forming] subunit beta (388 aa).

The ATP-grasp domain maps to 9–244; that stretch reads KQLFAEFGLP…PSQEDKREAH (236 aa). ATP contacts are provided by residues lysine 46, 53 to 55, glutamate 99, serine 102, and glutamate 107; that span reads GRG. Residues asparagine 199 and aspartate 213 each coordinate Mg(2+). Substrate is bound by residues asparagine 264 and 321 to 323; that span reads GIV.

This sequence belongs to the succinate/malate CoA ligase beta subunit family. In terms of assembly, heterotetramer of two alpha and two beta subunits. Mg(2+) is required as a cofactor.

The catalysed reaction is succinate + ATP + CoA = succinyl-CoA + ADP + phosphate. It catalyses the reaction GTP + succinate + CoA = succinyl-CoA + GDP + phosphate. It participates in carbohydrate metabolism; tricarboxylic acid cycle; succinate from succinyl-CoA (ligase route): step 1/1. Functionally, succinyl-CoA synthetase functions in the citric acid cycle (TCA), coupling the hydrolysis of succinyl-CoA to the synthesis of either ATP or GTP and thus represents the only step of substrate-level phosphorylation in the TCA. The beta subunit provides nucleotide specificity of the enzyme and binds the substrate succinate, while the binding sites for coenzyme A and phosphate are found in the alpha subunit. The protein is Succinate--CoA ligase [ADP-forming] subunit beta of Vibrio vulnificus (strain YJ016).